The primary structure comprises 24 residues: Defensin D5 (24 aa).

This sequence belongs to the DEFL family. Group IV subfamily. As to expression, distributed in the epidermal cell layer of leaves and in the subepidermal layer region of stems. Not in roots.

Its subcellular location is the secreted. It localises to the cell wall. Functionally, antimicrobial peptide. Active against Fusarium spp., Gram-positive and Gram-negative bacterial pathogens. The chain is Defensin D5 from Spinacia oleracea (Spinach).